Reading from the N-terminus, the 238-residue chain is ATP synthase subunit a (238 aa).

5 consecutive transmembrane segments (helical) span residues 15–35 (IFNL…FVFI), 76–96 (YSLF…LGLM), 111–131 (PTAN…LTHI), 167–187 (LALR…LLLL), and 208–230 (AFSV…VYLG).

It belongs to the ATPase A chain family. In terms of assembly, F-type ATPases have 2 components, CF(1) - the catalytic core - and CF(0) - the membrane proton channel. CF(1) has five subunits: alpha(3), beta(3), gamma(1), delta(1), epsilon(1). CF(0) has three main subunits: a(1), b(2) and c(9-12). The alpha and beta chains form an alternating ring which encloses part of the gamma chain. CF(1) is attached to CF(0) by a central stalk formed by the gamma and epsilon chains, while a peripheral stalk is formed by the delta and b chains.

It localises to the cell membrane. Key component of the proton channel; it plays a direct role in the translocation of protons across the membrane. The chain is ATP synthase subunit a from Streptococcus pneumoniae (strain 70585).